Here is a 105-residue protein sequence, read N- to C-terminus: UPF0235 protein RT0827 (105 aa).

Belongs to the UPF0235 family.

This chain is UPF0235 protein RT0827, found in Rickettsia typhi (strain ATCC VR-144 / Wilmington).